Here is a 395-residue protein sequence, read N- to C-terminus: MRN complex-interacting protein (395 aa).

Positions 90–100 (DPKSEQEEAHV) are enriched in basic and acidic residues. Disordered regions lie at residues 90–155 (DPKS…GGNC) and 180–275 (KRSS…FGES). Residues 104–113 (SKYTDQTTEG) show a composition bias toward polar residues. Acidic residues predominate over residues 117-127 (EKDDEDEDENV). The Nuclear localization signal (NLS) signature appears at 142 to 145 (RKKM). Residues 183-195 (SSSWNKGSVSKYS) are compositionally biased toward low complexity. Composition is skewed to polar residues over residues 224-244 (ACSS…QIKS) and 260-270 (QSESPSVSSHQ).

Belongs to the MRNIP family.

The protein resides in the nucleus. Its subcellular location is the nucleoplasm. In terms of biological role, plays a role in the cellular response to DNA damage and the maintenance of genome stability through its association with the MRN damage-sensing complex. Promotes chromatin loading and activity of the MRN complex to facilitate subsequent ATM-mediated DNA damage response signaling and DNA repair. The polypeptide is MRN complex-interacting protein (Danio rerio (Zebrafish)).